A 200-amino-acid polypeptide reads, in one-letter code: Chromophore lyase CpcS/CpeS (200 aa).

The protein belongs to the CpcS/CpeS biliprotein lyase family.

Functionally, covalently attaches a chromophore to Cys residue(s) of phycobiliproteins. In Synechococcus sp. (strain WH8020), this protein is Chromophore lyase CpcS/CpeS.